The primary structure comprises 354 residues: MNGTEGPNFYIPMSNKTGVVRSPFDYPQYYLAEPWKYSVLAAYMFLLILLGLPINFMTLYVTIQHKKLRTPLNYILLNLGVCNHFMVLCGFTITMYTSLHGYFVFGQTGCYFEGFFATLGGEIALWSLVVLAIERYIVVCKPMSNFRFGENHAMMGVAFTWIMALACAVPPLFGWSRYIPEGMQCSCGVDYYTLKPEVNNESFVIYMFVVHFLIPLIIISFCYGRLVCTVKEAAAQQQESATTQKAEKEVTRMVIIMVIFFLICWVPYAYVAFYIFTHQGSEFGPIFMTVPAFFAKSSAIYNPVIYIMLNKQFRNCMITTLCCGKNPFGDDDASSAATSKTEATSVSTSQVSPA.

Over 1–36 the chain is Extracellular; sequence MNGTEGPNFYIPMSNKTGVVRSPFDYPQYYLAEPWK. The N-linked (GlcNAc...) (hybrid) asparagine glycan is linked to Asn2. Asn15 is a glycosylation site (N-linked (GlcNAc...) asparagine). Residues 37–61 traverse the membrane as a helical segment; that stretch reads YSVLAAYMFLLILLGLPINFMTLYV. Residues 62–73 lie on the Cytoplasmic side of the membrane; sequence TIQHKKLRTPLN. The chain crosses the membrane as a helical span at residues 74 to 96; that stretch reads YILLNLGVCNHFMVLCGFTITMY. At 97 to 110 the chain is on the extracellular side; it reads TSLHGYFVFGQTGC. A disulfide bridge links Cys110 with Cys187. Residues 111 to 133 form a helical membrane-spanning segment; the sequence is YFEGFFATLGGEIALWSLVVLAI. The short motif at 134–136 is the 'Ionic lock' involved in activated form stabilization element; the sequence is ERY. The Cytoplasmic segment spans residues 134-152; that stretch reads ERYIVVCKPMSNFRFGENH. The helical transmembrane segment at 153-173 threads the bilayer; sequence AMMGVAFTWIMALACAVPPLF. Over 174 to 202 the chain is Extracellular; that stretch reads GWSRYIPEGMQCSCGVDYYTLKPEVNNES. Residues 203–224 form a helical membrane-spanning segment; it reads FVIYMFVVHFLIPLIIISFCYG. At 225–252 the chain is on the cytoplasmic side; it reads RLVCTVKEAAAQQQESATTQKAEKEVTR. A helical transmembrane segment spans residues 253-274; sequence MVIIMVIFFLICWVPYAYVAFY. The Extracellular segment spans residues 275–286; sequence IFTHQGSEFGPI. The chain crosses the membrane as a helical span at residues 287–308; sequence FMTVPAFFAKSSAIYNPVIYIM. Residue Lys296 is modified to N6-(retinylidene)lysine. The Cytoplasmic segment spans residues 309 to 354; the sequence is LNKQFRNCMITTLCCGKNPFGDDDASSAATSKTEATSVSTSQVSPA. Residues Cys322 and Cys323 are each lipidated (S-palmitoyl cysteine). Positions 332 to 354 are disordered; it reads DASSAATSKTEATSVSTSQVSPA. The segment covering 334-354 has biased composition (low complexity); the sequence is SSAATSKTEATSVSTSQVSPA.

Belongs to the G-protein coupled receptor 1 family. Opsin subfamily. Post-translationally, contains one covalently linked retinal chromophore. Upon light absorption, the covalently bound 11-cis-retinal is converted to all-trans-retinal. After hydrolysis of the Schiff base and release of the covalently bound all-trans-retinal, active rhodopsin is regenerated by binding of a fresh molecule of 11-cis-retinal. As to expression, detected in retina rod photoreceptor cell outer segments (at protein level). Detected in retina.

The protein localises to the membrane. It localises to the cell projection. Its subcellular location is the cilium. The protein resides in the photoreceptor outer segment. In terms of biological role, photoreceptor required for image-forming vision at low light intensity. Required for photoreceptor cell viability after birth. Light-induced isomerization of 11-cis to all-trans retinal triggers a conformational change that activates signaling via G-proteins. Subsequent receptor phosphorylation mediates displacement of the bound G-protein alpha subunit by arrestin and terminates signaling. The chain is Rhodopsin (RHO) from Lithobates pipiens (Northern leopard frog).